A 430-amino-acid polypeptide reads, in one-letter code: Enolase (430 aa).

Gln165 contacts (2R)-2-phosphoglycerate. The active-site Proton donor is the Glu207. Residues Asp244, Glu287, and Asp314 each contribute to the Mg(2+) site. 4 residues coordinate (2R)-2-phosphoglycerate: Lys339, Arg368, Ser369, and Lys390. Lys339 acts as the Proton acceptor in catalysis.

Belongs to the enolase family. Component of the RNA degradosome, a multiprotein complex involved in RNA processing and mRNA degradation. The cofactor is Mg(2+).

The protein resides in the cytoplasm. It localises to the secreted. The protein localises to the cell surface. It carries out the reaction (2R)-2-phosphoglycerate = phosphoenolpyruvate + H2O. The protein operates within carbohydrate degradation; glycolysis; pyruvate from D-glyceraldehyde 3-phosphate: step 4/5. Its function is as follows. Catalyzes the reversible conversion of 2-phosphoglycerate (2-PG) into phosphoenolpyruvate (PEP). It is essential for the degradation of carbohydrates via glycolysis. The protein is Enolase of Xylella fastidiosa (strain 9a5c).